The sequence spans 145 residues: 3-hydroxyacyl-[acyl-carrier-protein] dehydratase FabZ (145 aa).

His-48 is a catalytic residue.

The protein belongs to the thioester dehydratase family. FabZ subfamily.

Its subcellular location is the cytoplasm. The enzyme catalyses a (3R)-hydroxyacyl-[ACP] = a (2E)-enoyl-[ACP] + H2O. In terms of biological role, involved in unsaturated fatty acids biosynthesis. Catalyzes the dehydration of short chain beta-hydroxyacyl-ACPs and long chain saturated and unsaturated beta-hydroxyacyl-ACPs. In Cellvibrio japonicus (strain Ueda107) (Pseudomonas fluorescens subsp. cellulosa), this protein is 3-hydroxyacyl-[acyl-carrier-protein] dehydratase FabZ.